The sequence spans 380 residues: Serpin B7 (380 aa).

Phosphoserine occurs at positions 217 and 223.

This sequence belongs to the serpin family. Ov-serpin subfamily. Predominantly expressed in mesangial cells. Expressed in the epidermis of the whole body.

It is found in the cytoplasm. Functionally, might function as an inhibitor of Lys-specific proteases. Might influence the maturation of megakaryocytes via its action as a serpin. The protein is Serpin B7 (SERPINB7) of Homo sapiens (Human).